Here is a 438-residue protein sequence, read N- to C-terminus: 3-phosphoshikimate 1-carboxyvinyltransferase (438 aa).

Positions 26, 27, and 31 each coordinate 3-phosphoshikimate. Lysine 26 is a binding site for phosphoenolpyruvate. Phosphoenolpyruvate-binding residues include glycine 99 and arginine 127. 3-phosphoshikimate contacts are provided by serine 172, glutamine 174, aspartate 320, and lysine 347. Glutamine 174 serves as a coordination point for phosphoenolpyruvate. The active-site Proton acceptor is the aspartate 320. Arginine 351 and arginine 392 together coordinate phosphoenolpyruvate.

The protein belongs to the EPSP synthase family. Monomer.

The protein resides in the cytoplasm. It catalyses the reaction 3-phosphoshikimate + phosphoenolpyruvate = 5-O-(1-carboxyvinyl)-3-phosphoshikimate + phosphate. It functions in the pathway metabolic intermediate biosynthesis; chorismate biosynthesis; chorismate from D-erythrose 4-phosphate and phosphoenolpyruvate: step 6/7. In terms of biological role, catalyzes the transfer of the enolpyruvyl moiety of phosphoenolpyruvate (PEP) to the 5-hydroxyl of shikimate-3-phosphate (S3P) to produce enolpyruvyl shikimate-3-phosphate and inorganic phosphate. The polypeptide is 3-phosphoshikimate 1-carboxyvinyltransferase (Xanthomonas campestris pv. campestris (strain B100)).